Here is a 381-residue protein sequence, read N- to C-terminus: Chymosin (381 aa).

An N-terminal signal peptide occupies residues 1–16 (MRCLVVLLAALALSQA). The propeptide at 17-58 (SGITRIPLHKGKTLRKALKERGLLEDFLQRQQYAVSSKYSSL) is activation peptide. The Peptidase A1 domain occupies 74 to 378 (YFGKIYIGTP…DRANNRVGLA (305 aa)). Asp92 is a catalytic residue. Cys105 and Cys110 are joined by a disulfide. Asn158 carries N-linked (GlcNAc...) asparagine glycosylation. A disulfide bond links Cys265 and Cys269. Asp274 is a catalytic residue. A disulfide bridge links Cys308 with Cys341. A glycan (N-linked (GlcNAc...) asparagine) is linked at Asn349.

Belongs to the peptidase A1 family.

The enzyme catalyses Broad specificity similar to that of pepsin A. Clots milk by cleavage of a single 104-Ser-Phe-|-Met-Ala-107 bond in kappa-chain of casein.. Its function is as follows. Chymosin is synthesized in the mucosa of the abomasum (fourth stomach) of young (unweaned) ruminants. The enzyme hydrolyzes casein to paracasein. This chain is Chymosin, found in Camelus dromedarius (Dromedary).